Here is a 312-residue protein sequence, read N- to C-terminus: Light-independent protochlorophyllide reductase iron-sulfur ATP-binding protein (312 aa).

ATP contacts are provided by residues 55–60 and Lys84; that span reads GIGKST. Residue Ser59 participates in Mg(2+) binding. Residues Cys140 and Cys174 each coordinate [4Fe-4S] cluster. ATP contacts are provided by residues 225–226 and 249–251; these read NR and PDL.

The protein belongs to the NifH/BchL/ChlL family. Homodimer. Protochlorophyllide reductase is composed of three subunits; BchL, BchN and BchB. [4Fe-4S] cluster serves as cofactor.

The catalysed reaction is chlorophyllide a + oxidized 2[4Fe-4S]-[ferredoxin] + 2 ADP + 2 phosphate = protochlorophyllide a + reduced 2[4Fe-4S]-[ferredoxin] + 2 ATP + 2 H2O. The protein operates within porphyrin-containing compound metabolism; bacteriochlorophyll biosynthesis (light-independent). Component of the dark-operative protochlorophyllide reductase (DPOR) that uses Mg-ATP and reduced ferredoxin to reduce ring D of protochlorophyllide (Pchlide) to form chlorophyllide a (Chlide). This reaction is light-independent. The L component serves as a unique electron donor to the NB-component of the complex, and binds Mg-ATP. This is Light-independent protochlorophyllide reductase iron-sulfur ATP-binding protein from Rhodopseudomonas palustris (strain ATCC BAA-98 / CGA009).